The following is a 645-amino-acid chain: MSETKVYPVPETIQRDAHLNFEQYQEMYNRSIQDPEGFWSEQADKFLDWFSKWGTTCHWDLAKGDIRFFEGGTLNVAYNCVDRHLETRGDQTAIIWEGDEPDQDEHITYRDLYERVGRLANALKARGVKKGDRVCIYLPMVPEAAVAMLACARIGAVHSIVFGGFSPEALRDRIQDADAEVVITSDEGVRGGRSIPLKANTDKALEGCPNVKTVFVVRRTGGDIAWNDGRDVWFHEACAEASPDCPPEHMDAEDPLFILYTSGSTGKPKGVQHSTAGYLLGTAMTHKYIFDYQDGEVYWCTADVGWVTGHSYIVYGPLANGAKTLMFEGVPTYPDAGRFWQVVDKHEVSIFYTAPTAIRALMGQGDDHVKKTSRKSLRILGTVGEPINPEAWEWYYHTIGEDRCPIVDTWWQTETGSILIAPLPGAMDLKPGSATLPFFGVEPQLVDDKGNVLEGATNGNLVINRAWPSMMRTIYGDHERFFNTYLAAYPGKYFTGDGARRDEDGYYWITGRVDDVINVSGHRMGTAEVESALVLHDKVSEAAVVGYPHDVKGQGIYAYVTLMAGEEPSDELKQELVKLCIQEIGPIAKPDIIQFAPGLPKTRSGKIMRRILRKVASNELDSLGDTSTLADPTVVDTLIEDRANQ.

Residues arginine 190–arginine 193 and threonine 308 each bind CoA. Residues glycine 384–proline 386, aspartate 408–threonine 413, aspartate 497, and arginine 512 each bind ATP. Position 520 (serine 520) interacts with CoA. Arginine 523 provides a ligand contact to ATP. 3 residues coordinate Mg(2+): valine 534, histidine 536, and valine 539. Lysine 606 is modified (N6-acetyllysine).

Belongs to the ATP-dependent AMP-binding enzyme family. Mg(2+) is required as a cofactor. Post-translationally, acetylated. Deacetylation by the SIR2-homolog deacetylase activates the enzyme.

The enzyme catalyses acetate + ATP + CoA = acetyl-CoA + AMP + diphosphate. In terms of biological role, catalyzes the conversion of acetate into acetyl-CoA (AcCoA), an essential intermediate at the junction of anabolic and catabolic pathways. AcsA undergoes a two-step reaction. In the first half reaction, AcsA combines acetate with ATP to form acetyl-adenylate (AcAMP) intermediate. In the second half reaction, it can then transfer the acetyl group from AcAMP to the sulfhydryl group of CoA, forming the product AcCoA. This chain is Acetyl-coenzyme A synthetase, found in Halorhodospira halophila (strain DSM 244 / SL1) (Ectothiorhodospira halophila (strain DSM 244 / SL1)).